Reading from the N-terminus, the 354-residue chain is Methylthioribose-1-phosphate isomerase (354 aa).

Residues 58–60, Arg-101, and Gln-204 each bind substrate; that span reads RGA. The Proton donor role is filled by Asp-245. Substrate is bound at residue 255–256; sequence NK.

This sequence belongs to the eIF-2B alpha/beta/delta subunits family. MtnA subfamily.

The catalysed reaction is 5-(methylsulfanyl)-alpha-D-ribose 1-phosphate = 5-(methylsulfanyl)-D-ribulose 1-phosphate. It participates in amino-acid biosynthesis; L-methionine biosynthesis via salvage pathway; L-methionine from S-methyl-5-thio-alpha-D-ribose 1-phosphate: step 1/6. In terms of biological role, catalyzes the interconversion of methylthioribose-1-phosphate (MTR-1-P) into methylthioribulose-1-phosphate (MTRu-1-P). The protein is Methylthioribose-1-phosphate isomerase of Stenotrophomonas maltophilia (strain R551-3).